The primary structure comprises 210 residues: Proteasome subunit beta 2 (210 aa).

A propeptide spans 1-12 (removed in mature form; by autocatalysis); sequence MSNNVEEKILHG. Residue threonine 13 is the Nucleophile of the active site.

It belongs to the peptidase T1B family. In terms of assembly, the 20S proteasome core is composed of 14 alpha and 14 beta subunits that assemble into four stacked heptameric rings, resulting in a barrel-shaped structure. The two inner rings, each composed of seven catalytic beta subunits, are sandwiched by two outer rings, each composed of seven alpha subunits. The catalytic chamber with the active sites is on the inside of the barrel. Has a gated structure, the ends of the cylinder being occluded by the N-termini of the alpha-subunits. Is capped at one or both ends by the proteasome regulatory ATPase, PAN.

It is found in the cytoplasm. The catalysed reaction is Cleavage of peptide bonds with very broad specificity.. The formation of the proteasomal ATPase PAN-20S proteasome complex, via the docking of the C-termini of PAN into the intersubunit pockets in the alpha-rings, triggers opening of the gate for substrate entry. Interconversion between the open-gate and close-gate conformations leads to a dynamic regulation of the 20S proteasome proteolysis activity. Functionally, component of the proteasome core, a large protease complex with broad specificity involved in protein degradation. The chain is Proteasome subunit beta 2 from Cenarchaeum symbiosum (strain A).